The chain runs to 739 residues: MLHELLLALLGYTGDLIIDRRDNNLSANTPISDECTFKLAPDISFIDPSDRELIERIITLGFYYRELERFSAKSRNLNWIRSENANPLENKEKPSVYRRALANGIVEILAVYSSSILHIEQLLLSETMPILATVTQGLNKFFSLLPPLYELILKIERGDIRGGELLNLLHKKCHCGVPELQTCIQRLLWHGHQVMYNQLASWMVYGILEDRHGEFFISRQEGRDVENSSSHQEISEKLSRLSTADASLSDWHMGFHISLDMLPEYIPMRVAESILFAGKAVRVLRNPSPSFLSQDDVYPQEPKRFPKIHGFEGRFNFQREPIINTGMRVEDLLPQSEADKIENMLLDLKESSEFHKRSFECAVDSIQAIAASHLWQLVVVRADLNGHLKALKDYFLLAKGDFFQCFLEESRQLMRLPPRQSTAEADLMVPFQLASLKTIGEEDKYFSKVSLRMPSYGITVKPSLLNVPKATSAAADGISGASISNASSEMSVDGWDGIALEYSIEWPLHLFFTQEVLSRYLKVFQYLLRLKRTQMELEKLWASVMHQYHSIFAKNKKSDQDKSPITQQRDQRFRSMWRVREHMAFLIRNLQFYIQVDVIESQWNILQSHIQDSHDFTELVGFHQEYLSALISQTFLDIGSVSRILDGIMKLCLQFCWNIENQDNFSNTSELEHIAEEFNKKSNSLYTILRSSRLAGSQRTPFLRRFLLRLNLNSFFESTAKEVMNVVRPRPTFPGLNQR.

Belongs to the TUBGCP family.

Its subcellular location is the cytoplasm. It localises to the cytoskeleton. It is found in the microtubule organizing center. Gamma-tubulin complex is necessary for microtubule nucleation at the microtubule organizing centers (MTOCs). The sequence is that of Gamma-tubulin complex component 4 homolog (85P) from Medicago truncatula (Barrel medic).